The primary structure comprises 488 residues: Cysteine--tRNA ligase (488 aa).

Cys-29 contacts Zn(2+). Positions 31-41 (ATVQGMPHVGH) match the 'HIGH' region motif. Positions 227, 252, and 256 each coordinate Zn(2+). Positions 283-287 (KMSKS) match the 'KMSKS' region motif. Residue Lys-286 coordinates ATP.

The protein belongs to the class-I aminoacyl-tRNA synthetase family. As to quaternary structure, monomer. Requires Zn(2+) as cofactor.

The protein resides in the cytoplasm. The enzyme catalyses tRNA(Cys) + L-cysteine + ATP = L-cysteinyl-tRNA(Cys) + AMP + diphosphate. The chain is Cysteine--tRNA ligase from Pseudarthrobacter chlorophenolicus (strain ATCC 700700 / DSM 12829 / CIP 107037 / JCM 12360 / KCTC 9906 / NCIMB 13794 / A6) (Arthrobacter chlorophenolicus).